Consider the following 316-residue polypeptide: Biotin synthase (316 aa).

One can recognise a Radical SAM core domain in the interval 36–260 (NKIQISMLLN…LMPKSYIRLA (225 aa)). Positions 51, 55, and 58 each coordinate [4Fe-4S] cluster. Residues cysteine 95, cysteine 126, cysteine 186, and arginine 258 each coordinate [2Fe-2S] cluster.

It belongs to the radical SAM superfamily. Biotin synthase family. As to quaternary structure, homodimer. The cofactor is [4Fe-4S] cluster. [2Fe-2S] cluster serves as cofactor.

It catalyses the reaction (4R,5S)-dethiobiotin + (sulfur carrier)-SH + 2 reduced [2Fe-2S]-[ferredoxin] + 2 S-adenosyl-L-methionine = (sulfur carrier)-H + biotin + 2 5'-deoxyadenosine + 2 L-methionine + 2 oxidized [2Fe-2S]-[ferredoxin]. Its pathway is cofactor biosynthesis; biotin biosynthesis; biotin from 7,8-diaminononanoate: step 2/2. Functionally, catalyzes the conversion of dethiobiotin (DTB) to biotin by the insertion of a sulfur atom into dethiobiotin via a radical-based mechanism. The sequence is that of Biotin synthase from Lawsonia intracellularis (strain PHE/MN1-00).